A 795-amino-acid polypeptide reads, in one-letter code: ATP-dependent RNA helicase DHX15 (795 aa).

Positions 1–108 are disordered; sequence MSKRHRLDLG…HSTHAGHAGH (108 aa). Phosphoserine is present on serine 15. Residues 20-62 show a composition bias toward basic and acidic residues; it reads AGTDGKDRDRDRDREDRSKDRDRERDRGDREREREKEKEKELR. Positions 79–108 are enriched in low complexity; sequence ASHSAHSTHSAHSTHSTHSAHSTHAGHAGH. Residues 147–313 form the Helicase ATP-binding domain; sequence TDILVRHQSF…FDNCPLLTIP (167 aa). 160-167 contacts ATP; sequence GETGSGKT. The DEAH box signature appears at 260–263; it reads DEAH. The Helicase C-terminal domain occupies 338–518; that stretch reads TVIQIHMCEE…SVVLQLKKLG (181 aa). Lysine 488 carries the post-translational modification N6-acetyllysine. Lysine 786 is covalently cross-linked (Glycyl lysine isopeptide (Lys-Gly) (interchain with G-Cter in SUMO2)).

Belongs to the DEAD box helicase family. DEAH subfamily. DDX15/PRP43 sub-subfamily. As to quaternary structure, component of the U11/U12 snRNPs that are part of the U12-type spliceosome. Identified in the Intron Large spliceosome complex (IL, also named intron lariat spliceosome), a post-mRNA release spliceosomal complex containing the excised intron, U2, U5 and U6 snRNPs, and splicing factors; the association may be transient. The IL complex exists in two distinct conformations, one with the DHX15 (ILS2) and one without (ILS1). Interacts with TFIP11 (via G-patch domain); indicative for a recruitment to the IL complex. Interacts with SSB/La. Interacts with GPATCH2 (via G-patch domain); promoting the RNA helicase activity. Interacts with NKRF (via G-patch domain); promoting the RNA helicase activity. Interacts with NLRP6. Ubiquitous.

The protein localises to the nucleus. It localises to the nucleolus. It catalyses the reaction ATP + H2O = ADP + phosphate + H(+). ATPase activity is enhanced upon binding to G-patch domain-containing proteins. G-patch domain-containing proteins act like a brace that tethers mobile sections of DHX15 together, stabilizing a functional conformation with high RNA affinity, thereby promoting the ATPase activity. In terms of biological role, RNA helicase involved in mRNA processing and antiviral innate immunity. Pre-mRNA processing factor involved in disassembly of spliceosomes after the release of mature mRNA. In cooperation with TFIP11 seem to be involved in the transition of the U2, U5 and U6 snRNP-containing IL complex to the snRNP-free IS complex leading to efficient debranching and turnover of excised introns. Plays a key role in antiviral innate immunity by promoting both MAVS-dependent signaling and NLRP6 inflammasome. Acts as an RNA virus sensor: recognizes and binds viral double stranded RNA (dsRNA) and activates the MAVS-dependent signaling to produce interferon-beta and interferon lambda-3 (IFNL3). Involved in intestinal antiviral innate immunity together with NLRP6: recognizes and binds viral dsRNA and promotes activation of the NLRP6 inflammasome in intestinal epithelial cells to restrict infection by enteric viruses. The NLRP6 inflammasome acts by promoting maturation and secretion of IL18 in the extracellular milieu. Also involved in antibacterial innate immunity by promoting Wnt-induced antimicrobial protein expression in Paneth cells. The chain is ATP-dependent RNA helicase DHX15 from Homo sapiens (Human).